Consider the following 272-residue polypeptide: Insulin-like growth factor-binding protein 1 (272 aa).

Positions methionine 1 to glycine 25 are cleaved as a signal peptide. The IGFBP N-terminal domain occupies glutamine 28–glutamate 109. Intrachain disulfides connect cysteine 32/cysteine 59, cysteine 35/cysteine 61, cysteine 43/cysteine 62, cysteine 50/cysteine 65, cysteine 73/cysteine 86, and cysteine 80/cysteine 106. Phosphoserine occurs at positions 139, 157, and 169. Position 170 is a phosphothreonine (threonine 170). Tyrosine 171 is subject to Phosphotyrosine. The Thyroglobulin type-1 domain occupies lysine 186–cysteine 264. 3 disulfides stabilise this stretch: cysteine 189/cysteine 219, cysteine 230/cysteine 241, and cysteine 243/cysteine 264. Serine 255 bears the Phosphoserine mark. A Cell attachment site motif is present at residues arginine 259 to aspartate 261.

In terms of assembly, binds equally well IGF1 and IGF2. Interacts with integrin ITGA5:ITGB1. Interacts with VHL; this interaction inhibits HIF1A degradation.

The protein resides in the secreted. In terms of biological role, multifunctional protein that plays a critical role in regulating the availability of IGFs such as IGF1 and IGF2 to their receptors and thereby regulates IGF-mediated cellular processes including cell migration, proliferation, differentiation or apoptosis in a cell-type specific manner. Also plays a positive role in cell migration by interacting with integrin ITGA5:ITGB1 through its RGD motif. Mechanistically, binding to integrins leads to activation of focal adhesion kinase/PTK2 and stimulation of the mitogen-activated protein kinase (MAPK) pathway. Regulates cardiomyocyte apoptosis by suppressing HIF-1alpha/HIF1A ubiquitination and subsequent degradation. The chain is Insulin-like growth factor-binding protein 1 (Igfbp1) from Mus musculus (Mouse).